The following is a 912-amino-acid chain: Protein translocase subunit SecA (912 aa).

Residues Q87, 105–109, and D508 contribute to the ATP site; that span reads GEGKT. A disordered region spans residues 855-912; that stretch reads QHQDAGGYGADEEVEQMQGGNAPVPVSQVTRDEPKVGRNDPCPCGSGKKYKHCHGQLS. The Zn(2+) site is built by C896, C898, C907, and H908. The segment covering 902–912 has biased composition (basic residues); it reads KKYKHCHGQLS.

It belongs to the SecA family. In terms of assembly, monomer and homodimer. Part of the essential Sec protein translocation apparatus which comprises SecA, SecYEG and auxiliary proteins SecDF-YajC and YidC. It depends on Zn(2+) as a cofactor.

The protein localises to the cell inner membrane. The protein resides in the cytoplasm. It carries out the reaction ATP + H2O + cellular proteinSide 1 = ADP + phosphate + cellular proteinSide 2.. Its function is as follows. Part of the Sec protein translocase complex. Interacts with the SecYEG preprotein conducting channel. Has a central role in coupling the hydrolysis of ATP to the transfer of proteins into and across the cell membrane, serving both as a receptor for the preprotein-SecB complex and as an ATP-driven molecular motor driving the stepwise translocation of polypeptide chains across the membrane. The chain is Protein translocase subunit SecA from Xanthomonas campestris pv. campestris (strain 8004).